The chain runs to 992 residues: GYF domain-containing protein mpd2 (992 aa).

3 disordered regions span residues A24 to P105, G172 to S245, and F289 to R316. 2 stretches are compositionally biased toward polar residues: residues N25–I58 and K75–N104. S175 bears the Phosphoserine mark. Residues S193–S205 are compositionally biased toward low complexity. Polar residues-rich tracts occupy residues T214–P237 and F301–I315. Position 318 is a phosphothreonine (T318). Residue S320 is modified to Phosphoserine. Residues K336–A359 are disordered. The span at E337–S348 shows a compositional bias: polar residues. The GYF domain occupies L386 to A434. 8 disordered regions span residues D467 to K486, E496 to L563, S576 to S637, S651 to V682, E697 to G729, A760 to N794, V818 to L859, and T940 to V992. 2 stretches are compositionally biased toward polar residues: residues L474–G483 and A507–S532. The residue at position 509 (S509) is a Phosphoserine. 2 stretches are compositionally biased toward basic and acidic residues: residues M549 to E561 and E577 to R595. Over residues L596–A606 the composition is skewed to polar residues. Residues S604 and S637 each carry the phosphoserine modification. 2 stretches are compositionally biased toward polar residues: residues E658–G676 and V707–A721. S775, S829, S838, and S840 each carry phosphoserine. Polar residues-rich tracts occupy residues V825–L859 and D943–V966.

This sequence belongs to the SMY2/mpd2 family.

Its subcellular location is the cytoplasm. Has a role in mRNA export from the nucleus. In Schizosaccharomyces pombe (strain 972 / ATCC 24843) (Fission yeast), this protein is GYF domain-containing protein mpd2 (mpd2).